The chain runs to 87 residues: Acyl-CoA-binding protein (87 aa).

At Ser2 the chain carries N-acetylserine. The 86-residue stretch at 2 to 87 (SQAEFDKAAE…VEELKKKYGI (86 aa)) folds into the ACB domain. The residue at position 8 (Lys8) is an N6-acetyllysine; alternate. N6-succinyllysine; alternate is present on Lys8. Lys14 is an an acyl-CoA binding site. Lys17 carries the post-translational modification N6-succinyllysine. Lys19 carries the post-translational modification N6-acetyllysine. A Phosphotyrosine modification is found at Tyr29. An acyl-CoA contacts are provided by residues 29–33 (YSHYK), Lys51, Lys55, and Tyr74. Lys51 carries the post-translational modification N6-acetyllysine. Lys55 is modified (N6-acetyllysine; alternate). An N6-succinyllysine; alternate modification is found at Lys55. An N6-(2-hydroxyisobutyryl)lysine; alternate modification is found at Lys55. Lys55 bears the N6-malonyllysine; alternate mark. An N6-acetyllysine; alternate modification is found at Lys77. Lys77 carries the post-translational modification N6-succinyllysine; alternate.

It belongs to the ACBP family. In terms of assembly, monomer.

The protein resides in the endoplasmic reticulum. The protein localises to the golgi apparatus. Binds medium- and long-chain acyl-CoA esters with very high affinity and may function as an intracellular carrier of acyl-CoA esters. The protein is Acyl-CoA-binding protein (DBI) of Chaetophractus villosus (South American armadillo).